We begin with the raw amino-acid sequence, 485 residues long: Outer membrane protein OprM (485 aa).

The signal sequence occupies residues 1–17; that stretch reads MKRSFLSLAVAAVVLSG. Cys18 carries N-palmitoyl cysteine lipidation. Cys18 carries the S-diacylglycerol cysteine lipid modification.

This sequence belongs to the outer membrane factor (OMF) (TC 1.B.17) family. As to quaternary structure, component of the MexAB-OprM multidrug efflux complex, composed of six MexA subunits forming a hexameric tube, binding to a MexB trimer, which interact with the trimeric OprM outer membrane channel protein. The OprM homotrimer forms a 135 Angstroms-long pore. It consists of a beta-barrel, which is probably inserted in the outer membrane, and an alpha-barrel formed by alpha-helices which probably spans the periplasm. In the ground state the periplasmic end is closed, while the outer membrane end opening is 6-8 Angstroms in diameter. OprM does not directly contact MexB; instead, MexA joins MexB and OprM by forming a funnel-like hexamer anchored to the inner membrane. MexA may initially form a hexameric ring complex with MexB prior to OprM, then OprM undergoes a conformational change as it contacts MexA, allowing the periplasmic gate to open. It is thought that, under high intracellular substrate concentration, MexB ejects substrate into the tunnel formed by MexA-OprM; as the substrate level declines, conformational changes in MexB cause efflux to reduce and stop and the complex shifts to the closed state. MexB subunit acts as a substrate:proton antiporter and activity is enhanced significantly when in complex with MexA and OprM, in vitro.

The protein resides in the cell outer membrane. With respect to regulation, export of antibiotics and solvents is dramatically decreased in the presence of the protonophore carbonyl cyanide m-chlorophenylhydrazone (CCCP), therefore may be driven by a proton gradient. Antibiotic efflux is inhibited by pyridopyrimidine derivatives, such as ABI-PP, acting by binding to a hydrophobic pocket in MexB. Its function is as follows. The outer membrane component of the MexAB-OprM efflux system that confers multidrug resistance. Functions as the major efflux pump for n-hexane and p-xylene efflux. Has been shown in one study to be involved in the active efflux of the autoinducer N-(3-oxododecanoyl) homoserine lactone, thereby playing an indirect role in quorum-sensing; but has been shown in another study not to be involved in efflux of this autoinducer. Over-expression of the pump increases antibiotic and solvent efflux capacities. Can replace the OprJ outer membrane component of the MexCD-OprJ pump; the antibiotics exported are those exported by the intact MexCD pump, showing that efflux substrate specificity is not conferred by this component. Serves as the outer membrane component for the MexXY efflux system. Implicated in the secretion of the siderophore pyoverdine. OprM is probably involved in the efflux of the siderophore across the outer membrane. This chain is Outer membrane protein OprM (oprM), found in Pseudomonas aeruginosa (strain ATCC 15692 / DSM 22644 / CIP 104116 / JCM 14847 / LMG 12228 / 1C / PRS 101 / PAO1).